Consider the following 229-residue polypeptide: PHO85 cyclin-5 (229 aa).

A compositionally biased stretch (basic and acidic residues) spans 1-24 (MDGNHRFTPDSKEFNTVVKSKESS). A disordered region spans residues 1–46 (MDGNHRFTPDSKEFNTVVKSKESSTGRNPYQTPPLEHNGTHHQTNY).

It belongs to the cyclin family. PCL1,2 subfamily. In terms of assembly, forms a cyclin-CDK complex with PHO85.

Functionally, cyclin partner of the cyclin-dependent kinase (CDK) PHO85. Positively controls degradation of transcription factor GCN4 under favorable growth conditions. The PCL5-PHO85 cyclin-CDK holoenzyme phosphorylates GCN4, which is required for its degradation by the E3 ubiquitin ligase complex SCF(Cdc4). Amino acid starvation reduces PCL5-PHO85-associated GCN4 kinase activity and leads to stabilization of GCN4. The protein is PHO85 cyclin-5 (PCL5) of Saccharomyces cerevisiae (strain ATCC 204508 / S288c) (Baker's yeast).